The sequence spans 548 residues: MLLDTLLELAGGINNVTRILAPQGQVVLALKHPPLVPHLPDDVSLQSVLGEWQLSVQRTAEVSDQQLAAIGKAIAERQKLETLPYQTALDCPYRPLWHISPPQGLLNDPNGFIYHQGEYHLFYQWHPFACEHKDKYWVHLKSLDLVDWQWQSVALTPSDWFDSHGVFSGHAVSHQQDLWLFYTGNTRLGVDRQRQTMQCAARMNANGEFEKLGPVIRCLPEGVTEHIRDPKVIYTQGKWQMLLGAQTLAHQGRLAVYHSDDLLHWHFDKLYGDELGDYGYMWECPDWFELQGEAFFVFGPQGIASANPHHTIEHQNRIFRATQNAQGEIALLQGWPLDEGFDFYAPQTAQTADGRRVLCGWMGLPDETQHPSCDQGWIHQLTALRELEWREGRIYQHPLRELDTLQSEPHTLLLSDNVTELKTKSFALQVTLPWGCELRLMQNTQYRVTLTLDAENQLLRLDRSATQIRQGDTIRELKLDSPTVELRILADQSSLEIFINQGEHVMTSRIFTPRDASGISLHGASVDAKLYYMAPASAPFNLEVNVQP.

Substrate contacts are provided by residues 105–108 (LLND), Q124, 167–168 (FS), 228–229 (RD), and E283. D108 is an active-site residue.

Belongs to the glycosyl hydrolase 32 family.

The protein localises to the cytoplasm. It catalyses the reaction Hydrolysis of terminal non-reducing beta-D-fructofuranoside residues in beta-D-fructofuranosides.. It functions in the pathway glycan biosynthesis; sucrose metabolism. Its function is as follows. Enables the bacterium to metabolize sucrose as a sole carbon source. The protein is Probable sucrose-6-phosphate hydrolase of Vibrio cholerae serotype O1 (strain ATCC 39315 / El Tor Inaba N16961).